The sequence spans 363 residues: S-adenosylmethionine:tRNA ribosyltransferase-isomerase (363 aa).

This sequence belongs to the QueA family. As to quaternary structure, monomer.

The protein resides in the cytoplasm. It carries out the reaction 7-aminomethyl-7-carbaguanosine(34) in tRNA + S-adenosyl-L-methionine = epoxyqueuosine(34) in tRNA + adenine + L-methionine + 2 H(+). It participates in tRNA modification; tRNA-queuosine biosynthesis. In terms of biological role, transfers and isomerizes the ribose moiety from AdoMet to the 7-aminomethyl group of 7-deazaguanine (preQ1-tRNA) to give epoxyqueuosine (oQ-tRNA). This is S-adenosylmethionine:tRNA ribosyltransferase-isomerase from Haemophilus influenzae (strain PittEE).